Reading from the N-terminus, the 1017-residue chain is GPI ethanolamine phosphate transferase 3 (1017 aa).

The helical transmembrane segment at 34–54 (FYIILLVFIAILQFISIAFFT) threads the bilayer. N-linked (GlcNAc...) asparagine glycans are attached at residues Asn66, Asn71, Asn100, Asn182, and Asn203. Residues 347–367 (VSSLALLMGQPIPFNNLGWPI) form a helical membrane-spanning segment. N-linked (GlcNAc...) asparagine glycosylation is present at Asn411. The next 6 helical transmembrane spans lie at 457-477 (LLAT…SIVV), 484-504 (FVPG…GIFY), 515-535 (FWGT…ITIF), 558-578 (IAVM…FTIW), 582-602 (IVAF…VFLP), and 644-664 (LGGY…MITI). N-linked (GlcNAc...) asparagine glycosylation is found at Asn681 and Asn682. A helical membrane pass occupies residues 685–705 (WWVLGLCFLMIFILPACITGY). An N-linked (GlcNAc...) asparagine glycan is attached at Asn707. The chain crosses the membrane as a helical span at residues 715 to 735 (AAPIWINVFLKGILGLNFVYW). A glycan (N-linked (GlcNAc...) asparagine) is linked at Asn742. 6 consecutive transmembrane segments (helical) span residues 765-785 (IIAG…PLCI), 806-826 (NIYG…ILLF), 829-849 (PLAQ…LEII), 903-923 (IAII…VALL), 947-967 (GILL…VTHF), and 981-1001 (FIFA…GTIA).

The protein belongs to the PIGG/PIGN/PIGO family. PIGO subfamily. Glycosylated.

It localises to the endoplasmic reticulum membrane. Its pathway is glycolipid biosynthesis; glycosylphosphatidylinositol-anchor biosynthesis. Involved in glycosylphosphatidylinositol-anchor biosynthesis. Transfers ethanolamine phosphate to the GPI third mannose which links the GPI-anchor to the C-terminus of the proteins by an amide bond. Involved in cell wall biosynthesis. The sequence is that of GPI ethanolamine phosphate transferase 3 (GPI13) from Saccharomyces cerevisiae (strain ATCC 204508 / S288c) (Baker's yeast).